A 129-amino-acid polypeptide reads, in one-letter code: Transcriptional activator protein (129 aa).

Residues 1-12 show a composition bias toward low complexity; the sequence is MRSSSPSQPPSI. The disordered stretch occupies residues 1–23; it reads MRSSSPSQPPSIKKAHRQAKKRA. Residues 13–23 are compositionally biased toward basic residues; sequence KKAHRQAKKRA. Positions 13-28 match the Nuclear localization signal motif; that stretch reads KKAHRQAKKRAIRRRR. A zinc finger lies at 33–50; sequence CGCSIYFHIDCAGHGFTH. Residues 73–117 are disordered; sequence LFQDKPSRGHAIHQDQDIQRPNPVQPQPQESIGSPQSIPELPSLD. The segment covering 99 to 109 has biased composition (polar residues); it reads QPQESIGSPQS. The segment at 115–129 is transactivation; it reads SLDDIDDSFWVELFS.

It belongs to the geminiviridae transcriptional activator protein family. In terms of assembly, monomer. Homodimer. Homooligomer. Self-interaction correlates with nuclear localization and efficient activation of transcription. Monomers suppress local silencing by interacting with and inactivating host adenosine kinase 2 (ADK2) in the cytoplasm. Interacts with and inhibits host SNF1 kinase. Binds to ssDNA. In terms of processing, phosphorylated.

Its subcellular location is the host nucleus. The protein resides in the host cytoplasm. Strong activator of the late viral genes promoters. Enhances the expression of the capsid protein and nuclear shuttle protein. Acts as a suppressor of RNA-mediated gene silencing, also known as post-transcriptional gene silencing (PTGS), a mechanism of plant viral defense that limits the accumulation of viral RNAs. Suppresses the host RNA silencing by inhibiting adenosine kinase 2 (ADK2), a kinase involved in a general methylation pathway. Also suppresses the host basal defense by interacting with and inhibiting SNF1 kinase, a key regulator of cell metabolism implicated in innate antiviral defense. Determines pathogenicity. This Solanum tuberosum (Potato) protein is Transcriptional activator protein.